The primary structure comprises 241 residues: Ubiquinone biosynthesis O-methyltransferase (241 aa).

Positions 44, 63, 84, and 128 each coordinate S-adenosyl-L-methionine.

Belongs to the methyltransferase superfamily. UbiG/COQ3 family.

It carries out the reaction a 3-demethylubiquinol + S-adenosyl-L-methionine = a ubiquinol + S-adenosyl-L-homocysteine + H(+). The catalysed reaction is a 3-(all-trans-polyprenyl)benzene-1,2-diol + S-adenosyl-L-methionine = a 2-methoxy-6-(all-trans-polyprenyl)phenol + S-adenosyl-L-homocysteine + H(+). The protein operates within cofactor biosynthesis; ubiquinone biosynthesis. O-methyltransferase that catalyzes the 2 O-methylation steps in the ubiquinone biosynthetic pathway. This is Ubiquinone biosynthesis O-methyltransferase from Hydrogenovibrio crunogenus (strain DSM 25203 / XCL-2) (Thiomicrospira crunogena).